The sequence spans 239 residues: Ribitol-5-phosphate cytidylyltransferase (239 aa).

CTP-binding positions include 7–10 (FAGG) and 80–86 (GETGQMS).

It belongs to the IspD/TarI cytidylyltransferase family. TarI subfamily.

The enzyme catalyses D-ribitol 5-phosphate + CTP + H(+) = CDP-L-ribitol + diphosphate. Its pathway is cell wall biogenesis; poly(ribitol phosphate) teichoic acid biosynthesis. Functionally, catalyzes the transfer of the cytidylyl group of CTP to D-ribitol 5-phosphate. This is Ribitol-5-phosphate cytidylyltransferase from Streptococcus agalactiae serotype Ia (strain ATCC 27591 / A909 / CDC SS700).